Consider the following 237-residue polypeptide: MQIKTKAIVISSLKFQEKSLIVKCFTLSNGLKSYFVRDAFSSRKASQKIAYFQPLSILEIEAVHKNKGTLENFKEIKTAVPFQTIHTDIFKSTIVMFLSEMLHYSIQEEEKNEPLFVFLETALTWLDHHDDISNFHLILLLEITKYLGFYPDVSEIDLPYFEMKEGIFTLFHTSTALSEHETNLLKKLLDLKFDNSQKVFHVVERQILLRVLIDFYSAHLDGFKKPKSLDILKEIFS.

Belongs to the RecO family.

In terms of biological role, involved in DNA repair and RecF pathway recombination. The protein is DNA repair protein RecO of Flavobacterium johnsoniae (strain ATCC 17061 / DSM 2064 / JCM 8514 / BCRC 14874 / CCUG 350202 / NBRC 14942 / NCIMB 11054 / UW101) (Cytophaga johnsonae).